We begin with the raw amino-acid sequence, 334 residues long: Serine/Arginine-related protein 53 (334 aa).

The segment covering 1 to 13 has biased composition (basic and acidic residues); the sequence is MGRRSSDTEEESR. 3 disordered regions span residues 1 to 179, 198 to 220, and 246 to 290; these read MGRR…HLPP, DEALKAKERSEEEAKRRKEEDQA, and RSSK…SIPT. The segment covering 14–24 has biased composition (basic residues); that stretch reads SKRKKKHRRRS. Basic and acidic residues predominate over residues 44–62; it reads PRSDSRSWSRDRQLRSHSY. A compositionally biased stretch (basic residues) spans 78-118; the sequence is SRRKRSRSRSRGRGKPYRVQRSRSKSRTRRSRSRPRPRSHS. Basic and acidic residues-rich tracts occupy residues 132–166, 198–218, and 247–256; these read RSRDRDRRKVRDKEKREKEKDKGKDKEVHSIKRGD, DEALKAKERSEEEAKRRKEED, and SSKDVKKAVE. Positions 180–236 form a coiled coil; that stretch reads AEQAKARLQLVLEAAAKADEALKAKERSEEEAKRRKEEDQATLVEQVKRVKEIEAIE. The segment covering 265-278 has biased composition (low complexity); that stretch reads AASGPASAAAEPPS.

As to quaternary structure, interacts (via Arg/Ser-rich domain) with LUC7L3, RBM39 and RSF1. In terms of processing, phosphorylated.

Its subcellular location is the nucleus. The protein localises to the nucleus speckle. It localises to the cytoplasm. In terms of biological role, plays a role in pre-mRNA splicing. Involved in both constitutive and alternative pre-mRNA splicing. May have a role in the recognition of the 3' splice site during the second step of splicing. The protein is Serine/Arginine-related protein 53 (Rsrc1) of Mus musculus (Mouse).